The primary structure comprises 408 residues: Solute carrier family 35 member F1 (408 aa).

The segment at 1–20 (MIPPEPPQPQLQPPPPPAPP) is disordered. 10 helical membrane passes run 60 to 80 (MLIS…IGLT), 94 to 114 (VFQS…TLAV), 129 to 147 (WWKY…YLVV), 159 to 179 (QLLD…FLLI), 186 to 206 (FIGI…DVLV), 221 to 241 (LLVL…ESII), 247 to 267 (VEFL…QLAI), 284 to 304 (LLYV…PVVI), 311 to 331 (SVNL…LFLF), and 335 to 355 (FSGL…LYSS).

The protein belongs to the SLC35F solute transporter family.

It localises to the cytoplasmic vesicle. The protein localises to the secretory vesicle. The protein resides in the synaptic vesicle membrane. In terms of biological role, putative solute transporter. The protein is Solute carrier family 35 member F1 (Slc35f1) of Mus musculus (Mouse).